The chain runs to 165 residues: DELTA-actitoxin-Oor1a (165 aa).

The tract at residues 1–17 (ATFRVLAKVLAELGKVS) is N-terminal region. Positions 41, 74, 92, 94, and 125 each coordinate phosphocholine. The interval 92–107 (SVPYDYNLYSNWWNVK) is trp-rich region, which is important for the binding to lipid membrane.

The protein belongs to the actinoporin family. Sea anemone subfamily. Octamer or nonamer in membranes. Monomer in the soluble state.

The protein resides in the secreted. The protein localises to the nematocyst. It is found in the target cell membrane. In terms of biological role, pore-forming protein that forms cations-selective hydrophilic pores of around 1 nm and causes cardiac stimulation and cytolysis. Pore formation is a multi-step process that involves specific recognition of membrane sphingomyelin (but neither cholesterol nor phosphatidylcholine) using aromatic rich region and adjacent phosphocholine (POC) binding site, firm binding to the membrane (mainly driven by hydrophobic interactions) accompanied by the transfer of the N-terminal region to the lipid-water interface and finally pore formation after oligomerization of monomers. Cytolytic effects include red blood cells hemolysis, platelet aggregation and lysis, cytotoxic and cytostatic effects on fibroblasts. Lethality in mammals has been ascribed to severe vasospasm of coronary vessels, cardiac arrhythmia, and inotropic effects. This Oulactis orientalis (Japan anemone) protein is DELTA-actitoxin-Oor1a.